The primary structure comprises 105 residues: Large ribosomal subunit protein uL24 (105 aa).

Belongs to the universal ribosomal protein uL24 family. In terms of assembly, part of the 50S ribosomal subunit.

In terms of biological role, one of two assembly initiator proteins, it binds directly to the 5'-end of the 23S rRNA, where it nucleates assembly of the 50S subunit. Its function is as follows. One of the proteins that surrounds the polypeptide exit tunnel on the outside of the subunit. In Lachnoclostridium phytofermentans (strain ATCC 700394 / DSM 18823 / ISDg) (Clostridium phytofermentans), this protein is Large ribosomal subunit protein uL24.